Here is a 510-residue protein sequence, read N- to C-terminus: MDPSSAGAGGNSLASASCGDAQKRRVCYFYDPEVGNYYYGQGHPMKPHRVRMTHALLAHYGLLAPAKMEVLRPLPARGIDLCRFHSDDYVAFLRAVTPETQLGQVRALRRFNIGPDCPVFDGLYAYCQTYAGASVGAAVKLNHGTHDIAINWSGGLHHAKKSEASGFCYVNDIVLAILELLKLHERVLYIDIDIHHGDGVEEAFYTTNRVMTVSFHKFGDYFPGTGDIRDIGYSEGKYYCLNVPLDDGIDDDSYQSIFKPIISKVMEMYRPGAVVLQCGADSLSGDRLGCFNLSGKGHAECVKFMRSFNVPLLLLGGGGYTIRNVARCWCYETGVALGEELQEKLPYNEYYEYFGPEYSLYVAASNMENRNTNKQLEEIKCNILDNLSKLQHAPSVQFQERIPETKLPEPDEDQEDPDERHDPDSDMVLDDHKPTGHSARSLIHNIGVKREITETETKDQHGKRLTTEHKGPEPMAEDLGSSKQAPTADANAVAVNAPGNARNEPGSSPK.

Residues 24–338 (RRVCYFYDPE…WCYETGVALG (315 aa)) are histone deacetylase. His-158 (proton donor/acceptor) is an active-site residue. Zn(2+) contacts are provided by Asp-193, His-195, and Asp-281. Positions 394–510 (PSVQFQERIP…ARNEPGSSPK (117 aa)) are disordered. Composition is skewed to basic and acidic residues over residues 418–434 (DERHDPDSDMVLDDHKP) and 448–472 (VKREITETETKDQHGKRLTTEHKGP). Residues 485 to 503 (APTADANAVAVNAPGNARN) show a composition bias toward low complexity.

The protein belongs to the histone deacetylase family. HD Type 1 subfamily. The cofactor is Zn(2+). As to expression, expressed in roots.

The protein localises to the nucleus. It carries out the reaction N(6)-acetyl-L-lysyl-[histone] + H2O = L-lysyl-[histone] + acetate. Its function is as follows. Responsible for the deacetylation of lysine residues on the N-terminal part of the core histones (H2A, H2B, H3 and H4). Histone deacetylation gives a tag for epigenetic repression and plays an important role in transcriptional regulation, cell cycle progression and developmental events. Histone deacetylases act via the formation of large multiprotein complexes. This is Histone deacetylase 3 from Oryza sativa subsp. japonica (Rice).